Consider the following 164-residue polypeptide: MVNPTVFFDIAVDGEPLGRVSFELFADKVPKTAENFRALSTGEKGFGYKGSCFHRIIPGFMCQGGDFTRHNGTGGKSIYGEKFEDENFLLKHTGPGILSMANAGPNTNGSQFFICTAKTEWLDGKHVVFGRVKEGMSIVEAMEHFGSENGKTSKKITIANCGQL.

Position 1 is an N-acetylmethionine (Met1). At Val2 the chain carries N-acetylvaline; in Peptidyl-prolyl cis-trans isomerase A, N-terminally processed. Residues 7–163 (FFDIAVDGEP…KKITIANCGQ (157 aa)) form the PPIase cyclophilin-type domain. Position 28 is an N6-acetyllysine; alternate (Lys28). Residue Lys28 forms a Glycyl lysine isopeptide (Lys-Gly) (interchain with G-Cter in SUMO2); alternate linkage. Residue Lys28 forms a Glycyl lysine isopeptide (Lys-Gly) (interchain with G-Cter in ubiquitin); alternate linkage. 2 positions are modified to N6-acetyllysine: Lys44 and Lys76. The residue at position 77 (Ser77) is a Phosphoserine. Lys82 bears the N6-acetyllysine; alternate mark. Residue Lys82 forms a Glycyl lysine isopeptide (Lys-Gly) (interchain with G-Cter in SUMO2); alternate linkage. Thr93 carries the phosphothreonine modification. Asn108 carries an N-linked (GlcNAc...) asparagine glycan. Residues Lys125 and Lys133 each carry the N6-acetyllysine modification.

This sequence belongs to the cyclophilin-type PPIase family. PPIase A subfamily. In terms of assembly, interacts with protein phosphatase PPP3CA/calcineurin A. Interacts with isoform 2 of BSG/CD147. Interacts with FOXO1; the interaction promotes FOXO1 dephosphorylation, nuclear accumulation and transcriptional activity. Interacts with integrin ITGA2B:ITGB3; the interaction is ROS and peptidyl-prolyl cis-trans isomerase (PPIase) activity-dependent and is increased in the presence of thrombin. Interacts with MAP3K5. Interacts with TARDBP; the interaction is dependent on the RNA-binding activity of TARDBP and the PPIase activity of PPIA/CYPA and the acetylation of PPIA/CYPA at Lys-125 favors the interaction. Interacts with HNRNPA1, HNRNPA2B1, HNRNPC, RBMX, HNRNPK and HNRNPM. Post-translationally, acetylation at Lys-125 markedly inhibits catalysis of cis to trans isomerization. PPIA acetylation also antagonizes the immunosuppressive effects of cyclosporine by inhibiting the sequential steps of cyclosporine binding and calcineurin inhibition. Acetylation at Lys-125 favors the interaction with TARDBP.

The protein localises to the cytoplasm. It is found in the secreted. Its subcellular location is the nucleus. The catalysed reaction is [protein]-peptidylproline (omega=180) = [protein]-peptidylproline (omega=0). Its activity is regulated as follows. Binds cyclosporin A (CsA). CsA mediates some of its effects via an inhibitory action on PPIase. Functionally, catalyzes the cis-trans isomerization of proline imidic peptide bonds in oligopeptides. Exerts a strong chemotactic effect on leukocytes partly through activation of one of its membrane receptors BSG/CD147, initiating a signaling cascade that culminates in MAPK/ERK activation. Activates endothelial cells (ECs) in a proinflammatory manner by stimulating activation of NF-kappa-B and ERK, JNK and p38 MAP-kinases and by inducing expression of adhesion molecules including SELE and VCAM1. Induces apoptosis in ECs by promoting the FOXO1-dependent expression of CCL2 and BCL2L11 which are involved in EC chemotaxis and apoptosis. In response to oxidative stress, initiates proapoptotic and antiapoptotic signaling in ECs via activation of NF-kappa-B and AKT1 and up-regulation of antiapoptotic protein BCL2. Negatively regulates MAP3K5/ASK1 kinase activity, autophosphorylation and oxidative stress-induced apoptosis mediated by MAP3K5/ASK1. Necessary for the assembly of TARDBP in heterogeneous nuclear ribonucleoprotein (hnRNP) complexes and regulates TARDBP binding to RNA UG repeats and TARDBP-dependent expression of HDAC6, ATG7 and VCP which are involved in clearance of protein aggregates. Plays an important role in platelet activation and aggregation. Regulates calcium mobilization and integrin ITGA2B:ITGB3 bidirectional signaling via increased ROS production as well as by facilitating the interaction between integrin and the cell cytoskeleton. Binds heparan sulfate glycosaminoglycans. The protein is Peptidyl-prolyl cis-trans isomerase A (PPIA) of Oryctolagus cuniculus (Rabbit).